A 118-amino-acid chain; its full sequence is Small ribosomal subunit protein uS13 (118 aa).

The disordered stretch occupies residues G94–K118.

Belongs to the universal ribosomal protein uS13 family. Part of the 30S ribosomal subunit. Forms a loose heterodimer with protein S19. Forms two bridges to the 50S subunit in the 70S ribosome.

Its function is as follows. Located at the top of the head of the 30S subunit, it contacts several helices of the 16S rRNA. In the 70S ribosome it contacts the 23S rRNA (bridge B1a) and protein L5 of the 50S subunit (bridge B1b), connecting the 2 subunits; these bridges are implicated in subunit movement. Contacts the tRNAs in the A and P-sites. The polypeptide is Small ribosomal subunit protein uS13 (Cellvibrio japonicus (strain Ueda107) (Pseudomonas fluorescens subsp. cellulosa)).